Here is a 322-residue protein sequence, read N- to C-terminus: NAD(P)H-dependent D-xylose reductase (322 aa).

Residue Tyr-52 is the Proton donor of the active site. Residue His-114 coordinates substrate. NAD(+)-binding positions include 169–170, 218–227, and 274–284; these read SN, SSFGPQSFVE, and KSNLPERLVQN.

Belongs to the aldo/keto reductase family. In terms of assembly, homodimer.

The enzyme catalyses xylitol + NAD(+) = D-xylose + NADH + H(+). It catalyses the reaction xylitol + NADP(+) = D-xylose + NADPH + H(+). The protein operates within carbohydrate metabolism; D-xylose degradation. Reduces D-xylose into xylitol. Has a preference for NADPH, but can also utilize NADH as cosubstrate. This chain is NAD(P)H-dependent D-xylose reductase (XYL1), found in Candida tenuis (Yeast).